Here is a 494-residue protein sequence, read N- to C-terminus: MHPKRRLCWCLPASGAWAFMLTSLIADTTACESEERLFHKLFSRYNQFIRPVENVSDPVTVHFELAITQLTNVDEVNQIMETNLWLRHIWNDYKLRRDPREYDGIEFVRVPADKIWKPDIVLYNNAVGDFQVEGKTKALLRYDGMITWTPPAIFKSSCPMDITFFPFDHQNCSLKFGSWTYDKAKIDLLIIGSKVDMNEFWENSEWEIVDASGYKHDIKYNCCEEIYTDITYSFYIRRLPMFYTINLIIPCLFISFLTVLVFYLPSDCGEKVTLCISVLLSLTVFLLVITETIPSTSLVIPLVGEYLLFTMIFVTLSIVITVFVLNIHYRTPTTHTMPKWVKTVFLSLLPKVLLMQRPLEQEKKNISKKTKKGSAKTSGKSKHSKHKDNKLHKEQRCCHCDKADDLTSTRRSRLSHQSLKWMAEHTEYSPEVKDVINNVQFIAENMKSQNETKEVEDDWKYVAMVIDRVFLWVFIILCVFGTAGLFIQPLIADT.

Positions 1–31 (MHPKRRLCWCLPASGAWAFMLTSLIADTTAC) are cleaved as a signal peptide. The Extracellular portion of the chain corresponds to 32–240 (ESEERLFHKL…TYSFYIRRLP (209 aa)). Residues N54 and N171 are each glycosylated (N-linked (GlcNAc...) asparagine). C158 and C172 are disulfide-bonded. The next 3 membrane-spanning stretches (helical) occupy residues 241–265 (MFYTINLIIPCLFISFLTVLVFYLP), 272–290 (VTLCISVLLSLTVFLLVIT), and 306–327 (YLLFTMIFVTLSIVITVFVLNI). Topologically, residues 328–468 (HYRTPTTHTM…WKYVAMVIDR (141 aa)) are cytoplasmic. Positions 364–390 (KNISKKTKKGSAKTSGKSKHSKHKDNK) are disordered. Basic residues predominate over residues 366 to 390 (ISKKTKKGSAKTSGKSKHSKHKDNK). The chain crosses the membrane as a helical span at residues 469–489 (VFLWVFIILCVFGTAGLFIQP).

Belongs to the ligand-gated ion channel (TC 1.A.9) family. Acetylcholine receptor (TC 1.A.9.1) subfamily. Alpha-6/CHRNA6 sub-subfamily. As to quaternary structure, neuronal AChR is composed of two different types of subunits: alpha and non-alpha (beta). CHRNA6/alpha-6 subunit can be combined to CHRNB2/beta-2, CHRNA4/alpha-4 and CHRNB3/beta-3 to give rise to functional receptors. Heteropentamers containing CHRNB3 have an stoichiometry of (CHRNA6:CHRNB2)2:CHRNB3. Interacts with LYPD6.

The protein localises to the synaptic cell membrane. It catalyses the reaction K(+)(in) = K(+)(out). It carries out the reaction Na(+)(in) = Na(+)(out). The catalysed reaction is Ca(2+)(in) = Ca(2+)(out). With respect to regulation, activated by a myriad of ligands such as acetylcholine, cytisine and nicotine. CHRNA6 nAChR activity is inhibited by the antagonists alpha-conotoxin MII and PIA, a small disulfide-constrained peptides from cone snails. Its function is as follows. Component of neuronal acetylcholine receptors (nAChRs) that function as pentameric, ligand-gated cation channels with high calcium permeability among other activities. nAChRs are excitatory neurotrasnmitter receptors formed by a collection of nAChR subunits known to mediate synaptic transmission in the nervous system and the neuromuscular junction. Each nAchR subunit confers differential attributes to channel properties, including activation, deactivation and desensitization kinetics, pH sensitivity, cation permeability, and binding to allosteric modulators. CHRNA6 forms pentameric channels with CHRNB2 and CHRNA4 that exhibit high sensitivity to ACh and nicotine and are predominantly expressed in only a few brain areas, including dopaminergic neurons, norepirephrine neurons and cells of the visual system. nAChrs containing CHRNA6 subunits mediate endogenous cholinergic modulation of dopamine and gamma-aminobutyric acid (GABA) release in response to nicotine at nerve terminals. Functionally, component of neuronal acetylcholine receptors (nAChRs) that function as pentameric, ligand-gated cation channels with high calcium permeability among other activities. nAChRs are excitatory neurotrasnmitter receptors formed by a collection of nAChR subunits known to mediate synaptic transmission in the nervous system and the neuromuscular junction. Each nAchR subunit confers differential attributes to channel properties, including activation, deactivation and desensitization kinetics, pH sensitivity, cation permeability, and binding to allosteric modulators. CHRNA6 forms pentameric channels with CHRNB2, CHRNB3 and CHRNA4 that exhibit high sensitivity to ACh and nicotine and are predominantly expressed in only a few brain areas, including dopaminergic neurons, norepirephrine neurons and cells of the visual system. nAChrs containing CHRNA6 subunits mediate endogenous cholinergic modulation of dopamine and gamma-aminobutyric acid (GABA) release in response to nicotine at nerve terminals. In Gallus gallus (Chicken), this protein is Neuronal acetylcholine receptor subunit alpha-6 (CHRNA6).